Here is a 231-residue protein sequence, read N- to C-terminus: Phosphoribosylformylglycinamidine synthase subunit PurQ (231 aa).

The region spanning 3–231 is the Glutamine amidotransferase type-1 domain; that stretch reads FGVLIFPGSN…ESMVGAMAKR (229 aa). The active-site Nucleophile is Cys-86. Residues His-203 and Glu-205 contribute to the active site.

In terms of assembly, part of the FGAM synthase complex composed of 1 PurL, 1 PurQ and 2 PurS subunits.

It is found in the cytoplasm. It carries out the reaction N(2)-formyl-N(1)-(5-phospho-beta-D-ribosyl)glycinamide + L-glutamine + ATP + H2O = 2-formamido-N(1)-(5-O-phospho-beta-D-ribosyl)acetamidine + L-glutamate + ADP + phosphate + H(+). It catalyses the reaction L-glutamine + H2O = L-glutamate + NH4(+). The protein operates within purine metabolism; IMP biosynthesis via de novo pathway; 5-amino-1-(5-phospho-D-ribosyl)imidazole from N(2)-formyl-N(1)-(5-phospho-D-ribosyl)glycinamide: step 1/2. In terms of biological role, part of the phosphoribosylformylglycinamidine synthase complex involved in the purines biosynthetic pathway. Catalyzes the ATP-dependent conversion of formylglycinamide ribonucleotide (FGAR) and glutamine to yield formylglycinamidine ribonucleotide (FGAM) and glutamate. The FGAM synthase complex is composed of three subunits. PurQ produces an ammonia molecule by converting glutamine to glutamate. PurL transfers the ammonia molecule to FGAR to form FGAM in an ATP-dependent manner. PurS interacts with PurQ and PurL and is thought to assist in the transfer of the ammonia molecule from PurQ to PurL. This Koribacter versatilis (strain Ellin345) protein is Phosphoribosylformylglycinamidine synthase subunit PurQ.